The sequence spans 377 residues: Nitric oxide reductase FlRd-NAD(+) reductase (377 aa).

The protein belongs to the FAD-dependent oxidoreductase family. It depends on FAD as a cofactor.

It is found in the cytoplasm. It catalyses the reaction 2 reduced [nitric oxide reductase rubredoxin domain] + NAD(+) + H(+) = 2 oxidized [nitric oxide reductase rubredoxin domain] + NADH. It functions in the pathway nitrogen metabolism; nitric oxide reduction. Functionally, one of at least two accessory proteins for anaerobic nitric oxide (NO) reductase. Reduces the rubredoxin moiety of NO reductase. The polypeptide is Nitric oxide reductase FlRd-NAD(+) reductase (Escherichia coli O6:H1 (strain CFT073 / ATCC 700928 / UPEC)).